The following is a 162-amino-acid chain: Heat shock protein beta-6 (162 aa).

Residues 1–72 (MEIPVPVQPS…PTAQVSTDSG (72 aa)) are involved in stabilization of the HSPB1:HSBP6 heterodimer. At serine 16 the chain carries Phosphoserine. The sHSP domain occupies 56–162 (RAPSVALPTA…AQLPSPPAAK (107 aa)). Residue glutamine 66 is modified to Deamidated glutamine. Residue serine 157 is modified to Phosphoserine.

This sequence belongs to the small heat shock protein (HSP20) family. In terms of assembly, homodimer. Small heat shock proteins form high molecular mass oligomers containing variable number of monomers; these oligomers display a very flexible quaternary structure easily exchanging their subunits. Heterooligomer with HSPB1; formed through oligomerization of HSPB1:HSBP6 dimers; subunit exchange leads to formation of at least two different heterooligomeric complexes, differing in variable quantities of HSPB1 and HSPB6 homodimers in addition to HSPB1:HSPB6 heterodimers. Heterooligomer with CRYAB; large heterooligomers consist of CRYAB homodimers and HSPB5:HSPB6 heterodimers but lacking HSPB6 homodimers. Interacts with BAG3. Interacts (phosphorylated) with YWHAZ. Interacts with PDE4A and PDE4D; required for maintenance of the non-phosphorylated state of HSPB6 under basal conditions. Interacts with KDR. Interacts with PRKD1. In terms of processing, phosphorylated at Ser-16 by PKA and probably PKD1K; required to protect cardiomyocytes from apoptosis.

The protein resides in the cytoplasm. It localises to the nucleus. The protein localises to the secreted. Functionally, small heat shock protein which functions as a molecular chaperone probably maintaining denatured proteins in a folding-competent state. Seems to have versatile functions in various biological processes. Plays a role in regulating muscle function such as smooth muscle vasorelaxation and cardiac myocyte contractility. May regulate myocardial angiogenesis implicating KDR. Overexpression mediates cardioprotection and angiogenesis after induced damage. Stabilizes monomeric YWHAZ thereby supporting YWHAZ chaperone-like activity. The sequence is that of Heat shock protein beta-6 (Hspb6) from Mus musculus (Mouse).